The chain runs to 111 residues: UPF0122 protein LACR_1522 (111 aa).

It belongs to the UPF0122 family.

Its function is as follows. Might take part in the signal recognition particle (SRP) pathway. This is inferred from the conservation of its genetic proximity to ftsY/ffh. May be a regulatory protein. The polypeptide is UPF0122 protein LACR_1522 (Lactococcus lactis subsp. cremoris (strain SK11)).